The following is a 429-amino-acid chain: 3-phosphoshikimate 1-carboxyvinyltransferase (429 aa).

Positions 23, 24, and 28 each coordinate 3-phosphoshikimate. Phosphoenolpyruvate is bound at residue Lys23. 2 residues coordinate phosphoenolpyruvate: Gly95 and Arg123. Ser168, Gln170, Asp316, and Lys343 together coordinate 3-phosphoshikimate. Gln170 contributes to the phosphoenolpyruvate binding site. Asp316 (proton acceptor) is an active-site residue. Arg347 and Arg389 together coordinate phosphoenolpyruvate.

The protein belongs to the EPSP synthase family. In terms of assembly, monomer.

It localises to the cytoplasm. The enzyme catalyses 3-phosphoshikimate + phosphoenolpyruvate = 5-O-(1-carboxyvinyl)-3-phosphoshikimate + phosphate. Its pathway is metabolic intermediate biosynthesis; chorismate biosynthesis; chorismate from D-erythrose 4-phosphate and phosphoenolpyruvate: step 6/7. Catalyzes the transfer of the enolpyruvyl moiety of phosphoenolpyruvate (PEP) to the 5-hydroxyl of shikimate-3-phosphate (S3P) to produce enolpyruvyl shikimate-3-phosphate and inorganic phosphate. In Bacillus cereus (strain ZK / E33L), this protein is 3-phosphoshikimate 1-carboxyvinyltransferase.